Here is a 1158-residue protein sequence, read N- to C-terminus: ATP-dependent helicase/deoxyribonuclease subunit B (1158 aa).

8–15 is an ATP binding site; sequence GRAGTGKS. 4 residues coordinate [4Fe-4S] cluster: C791, C1112, C1115, and C1121.

Belongs to the helicase family. AddB/RexB type 1 subfamily. In terms of assembly, heterodimer of AddA and AddB. The cofactor is Mg(2+). It depends on [4Fe-4S] cluster as a cofactor.

Its function is as follows. The heterodimer acts as both an ATP-dependent DNA helicase and an ATP-dependent, dual-direction single-stranded exonuclease. Recognizes the chi site generating a DNA molecule suitable for the initiation of homologous recombination. The AddB subunit has 5' -&gt; 3' nuclease activity but not helicase activity. The polypeptide is ATP-dependent helicase/deoxyribonuclease subunit B (Clostridium perfringens (strain 13 / Type A)).